The sequence spans 184 residues: Adenine phosphoribosyltransferase (184 aa).

Belongs to the purine/pyrimidine phosphoribosyltransferase family. As to quaternary structure, homodimer.

The protein localises to the cytoplasm. The catalysed reaction is AMP + diphosphate = 5-phospho-alpha-D-ribose 1-diphosphate + adenine. It participates in purine metabolism; AMP biosynthesis via salvage pathway; AMP from adenine: step 1/1. Catalyzes a salvage reaction resulting in the formation of AMP, that is energically less costly than de novo synthesis. In Shewanella baltica (strain OS223), this protein is Adenine phosphoribosyltransferase.